The sequence spans 491 residues: Proline-rich protein PRCC (491 aa).

Positions 1-100 (MSLVAYASSD…PPPPGVSPAE (100 aa)) are mediates interaction with MAD2L2. 3 disordered regions span residues 1-244 (MSLV…SPSA), 260-313 (ITQE…PAFQ), and 432-454 (EEKT…QRRK). The span at 10-26 (DESEPDEAEPEPEEEEA) shows a compositional bias: acidic residues. Residues 40–49 (ASLPAPKGPA) are compositionally biased toward low complexity. Residues 50 to 96 (LLPPPPQMLAPAFPPPLLLPPPTGDPRLQPPPPLPFGLGGFPPPPGV) show a composition bias toward pro residues. 6 positions are modified to phosphoserine: Ser97, Ser114, Ser157, Ser159, Ser212, and Ser218. Over residues 111 to 120 (GLPSPRGPGL) the composition is skewed to low complexity. A compositionally biased stretch (low complexity) spans 230-244 (APVVGTTTTTPSPSA). Phosphothreonine is present on Thr239. Phosphoserine is present on residues Ser241 and Ser267. Residues 262-272 (QEEDDSDEEVA) are compositionally biased toward acidic residues. A compositionally biased stretch (pro residues) spans 287 to 307 (GVEPYPYPIPTVPEELPPGTE).

In terms of assembly, interacts with MAD2L2; the interaction is direct. As to expression, ubiquitous in fetal and adult tissues.

The protein resides in the nucleus. May regulate cell cycle progression through interaction with MAD2L2. The protein is Proline-rich protein PRCC (PRCC) of Homo sapiens (Human).